The chain runs to 839 residues: Mitochondrial 15S rRNA processing factor CCM1 (839 aa).

The transit peptide at 1–59 (MLSLKSRGSWNVLRWIQVPRRTAVIPAKPSPMRRKRRRIKNVSSKDLDLRGIDPQDSRA) directs the protein to the mitochondrion. PPR repeat units follow at residues 313-347 (NREN…SSSH) and 350-384 (DVTT…QLQP).

Belongs to the CCM1 family. In terms of assembly, binds to mitochondrial small subunit 15S rRNA.

It is found in the mitochondrion. Regulates mitochondrial small subunit maturation by controlling 15S rRNA 5'-end processing. Localizes to the 5' precursor of the 15S rRNA in a position that is subsequently occupied by mS47 in the mature yeast mtSSU. Uses structure and sequence-specific RNA recognition, binding to a single-stranded region of the precursor and specifically recognizing bases -6 to -1. The exchange of Ccm1 for mS47 is coupled to the irreversible removal of precursor rRNA that is accompanied by conformational changes of the mitoribosomal proteins uS5m and mS26. These conformational changes signal completion of 5'-end rRNA processing through protection of the mature 5'-end of the 15S rRNA and stabilization of mS47. The removal of the 5' precursor together with the dissociation of Ccm1 may be catalyzed by the 5'-3' exoribonuclease Pet127. Involved in the specific removal of group I introns in mitochondrial encoded transcripts. In Zygosaccharomyces rouxii (strain ATCC 2623 / CBS 732 / NBRC 1130 / NCYC 568 / NRRL Y-229), this protein is Mitochondrial 15S rRNA processing factor CCM1 (CCM1).